The following is a 173-amino-acid chain: Probable chemoreceptor glutamine deamidase CheD (173 aa).

It belongs to the CheD family.

It catalyses the reaction L-glutaminyl-[protein] + H2O = L-glutamyl-[protein] + NH4(+). In terms of biological role, probably deamidates glutamine residues to glutamate on methyl-accepting chemotaxis receptors (MCPs), playing an important role in chemotaxis. This is Probable chemoreceptor glutamine deamidase CheD from Haloarcula marismortui (strain ATCC 43049 / DSM 3752 / JCM 8966 / VKM B-1809) (Halobacterium marismortui).